Here is a 462-residue protein sequence, read N- to C-terminus: uncharacterized protein (462 aa).

Helical transmembrane passes span 381–401 (WILG…FKGM) and 433–453 (LWIL…NLYI).

The protein localises to the cell membrane. This is an uncharacterized protein from Methanocaldococcus jannaschii (strain ATCC 43067 / DSM 2661 / JAL-1 / JCM 10045 / NBRC 100440) (Methanococcus jannaschii).